We begin with the raw amino-acid sequence, 117 residues long: MARVKTGVVRRRRHKKVLKLARGFYSARHKHFRKAKEQLERSLVYAFRDRRAKKRDFRRLWIIRINAACRLNDISYSRFMNGLKKANIALDRKVLANLAMNDAAAFAAIVAEAKKAL.

Belongs to the bacterial ribosomal protein bL20 family.

Its function is as follows. Binds directly to 23S ribosomal RNA and is necessary for the in vitro assembly process of the 50S ribosomal subunit. It is not involved in the protein synthesizing functions of that subunit. This Campylobacter fetus subsp. fetus (strain 82-40) protein is Large ribosomal subunit protein bL20.